The primary structure comprises 268 residues: MNGNSIIGLIGHPVSHSIGQILYNRIFQDMGIDAFYLAMDVHMNVLPAFLKNSFFLKAFNVTIPHKVSIIPFLDDLDEIASQTRSVNLVIREQSRMKGYNTDYYGLDYALSFNQVEIEEKRIVIAGSGGIARTVIRYMLDHGAHRVDVLTRNAQNARRNLDIPGIGLHENIDEDYDIYVNCTPLGTLGDGDPFSTVDFRSGRTGIDLVYNPPDTPFLKRMRNAGGRTVSGLDVFIGQGLRTLELVFGIRPDSIFREYAVEALNEIRKG.

T62 is a shikimate binding site. K66 serves as the catalytic Proton acceptor. E78 serves as a coordination point for NADP(+). Residues N87 and D102 each contribute to the shikimate site. Residues 126–130 (GSGGI) and L207 contribute to the NADP(+) site. Residue Y209 coordinates shikimate. G230 contacts NADP(+).

The protein belongs to the shikimate dehydrogenase family. As to quaternary structure, homodimer.

The catalysed reaction is shikimate + NADP(+) = 3-dehydroshikimate + NADPH + H(+). It functions in the pathway metabolic intermediate biosynthesis; chorismate biosynthesis; chorismate from D-erythrose 4-phosphate and phosphoenolpyruvate: step 4/7. In terms of biological role, involved in the biosynthesis of the chorismate, which leads to the biosynthesis of aromatic amino acids. Catalyzes the reversible NADPH linked reduction of 3-dehydroshikimate (DHSA) to yield shikimate (SA). This chain is Shikimate dehydrogenase (NADP(+)), found in Thermoplasma acidophilum (strain ATCC 25905 / DSM 1728 / JCM 9062 / NBRC 15155 / AMRC-C165).